A 748-amino-acid polypeptide reads, in one-letter code: Putative pre-mRNA-splicing factor ATP-dependent RNA helicase DHX32 (748 aa).

One can recognise a Helicase ATP-binding domain in the interval 74–240; it reads LEHLAHNQIV…YGNAPLVEAE (167 aa). An ATP-binding site is contributed by 87–94; it reads AGPKSGKS. Residues 263 to 439 form the Helicase C-terminal domain; sequence RLLFEIHHTK…SMVLFLKRMD (177 aa). The disordered stretch occupies residues 706-748; it reads SETKDLLQQDQTPDTPPTEEPREEEPLHEANDEGTAEQRCIIQ.

It belongs to the DEAD box helicase family. DEAH subfamily.

The protein resides in the nucleus. Its subcellular location is the mitochondrion. The enzyme catalyses ATP + H2O = ADP + phosphate + H(+). The protein is Putative pre-mRNA-splicing factor ATP-dependent RNA helicase DHX32 (dhx32) of Xenopus laevis (African clawed frog).